The chain runs to 310 residues: tRNA uridine(34) hydroxylase (310 aa).

The Rhodanese domain maps to 124–218 (SDPEVLLIDT…YFEEVPQEES (95 aa)). C178 serves as the catalytic Cysteine persulfide intermediate.

This sequence belongs to the TrhO family.

It catalyses the reaction uridine(34) in tRNA + AH2 + O2 = 5-hydroxyuridine(34) in tRNA + A + H2O. Its function is as follows. Catalyzes oxygen-dependent 5-hydroxyuridine (ho5U) modification at position 34 in tRNAs. The chain is tRNA uridine(34) hydroxylase from Pseudomonas putida (strain ATCC 700007 / DSM 6899 / JCM 31910 / BCRC 17059 / LMG 24140 / F1).